A 380-amino-acid chain; its full sequence is Deoxyguanosinetriphosphate triphosphohydrolase-like protein (380 aa).

Residues 79-196 (RLTHTLEVQQ…VDAADALAYT (118 aa)) enclose the HD domain.

It belongs to the dGTPase family. Type 2 subfamily.

In Deinococcus deserti (strain DSM 17065 / CIP 109153 / LMG 22923 / VCD115), this protein is Deoxyguanosinetriphosphate triphosphohydrolase-like protein.